The chain runs to 78 residues: Exodeoxyribonuclease 7 small subunit (78 aa).

Belongs to the XseB family. In terms of assembly, heterooligomer composed of large and small subunits.

It is found in the cytoplasm. It carries out the reaction Exonucleolytic cleavage in either 5'- to 3'- or 3'- to 5'-direction to yield nucleoside 5'-phosphates.. Its function is as follows. Bidirectionally degrades single-stranded DNA into large acid-insoluble oligonucleotides, which are then degraded further into small acid-soluble oligonucleotides. This Finegoldia magna (strain ATCC 29328 / DSM 20472 / WAL 2508) (Peptostreptococcus magnus) protein is Exodeoxyribonuclease 7 small subunit.